The sequence spans 212 residues: Pyridoxine/pyridoxamine 5'-phosphate oxidase (212 aa).

Residues 8–11 (RTDY) and lysine 66 each bind substrate. FMN-binding positions include 61–66 (RIVLLK), 76–77 (FT), lysine 83, and glutamine 105. Positions 123, 127, and 131 each coordinate substrate. FMN contacts are provided by residues 140-141 (QS) and tryptophan 184. 190–192 (RLH) is a substrate binding site. Residue arginine 194 participates in FMN binding.

Belongs to the pyridoxamine 5'-phosphate oxidase family. As to quaternary structure, homodimer. FMN is required as a cofactor.

The catalysed reaction is pyridoxamine 5'-phosphate + O2 + H2O = pyridoxal 5'-phosphate + H2O2 + NH4(+). The enzyme catalyses pyridoxine 5'-phosphate + O2 = pyridoxal 5'-phosphate + H2O2. It participates in cofactor metabolism; pyridoxal 5'-phosphate salvage; pyridoxal 5'-phosphate from pyridoxamine 5'-phosphate: step 1/1. Its pathway is cofactor metabolism; pyridoxal 5'-phosphate salvage; pyridoxal 5'-phosphate from pyridoxine 5'-phosphate: step 1/1. Functionally, catalyzes the oxidation of either pyridoxine 5'-phosphate (PNP) or pyridoxamine 5'-phosphate (PMP) into pyridoxal 5'-phosphate (PLP). The polypeptide is Pyridoxine/pyridoxamine 5'-phosphate oxidase (Ralstonia pickettii (strain 12J)).